A 255-amino-acid polypeptide reads, in one-letter code: Proteasome subunit alpha (255 aa).

The interval 224–255 (RLEELLGERGPAQHAPEEPADPEPEPPIAPPG) is disordered.

It belongs to the peptidase T1A family. In terms of assembly, the 20S proteasome core is composed of 14 alpha and 14 beta subunits that assemble into four stacked heptameric rings, resulting in a barrel-shaped structure. The two inner rings, each composed of seven catalytic beta subunits, are sandwiched by two outer rings, each composed of seven alpha subunits. The catalytic chamber with the active sites is on the inside of the barrel. Has a gated structure, the ends of the cylinder being occluded by the N-termini of the alpha-subunits. Is capped by the proteasome-associated ATPase, ARC.

The protein resides in the cytoplasm. It functions in the pathway protein degradation; proteasomal Pup-dependent pathway. The formation of the proteasomal ATPase ARC-20S proteasome complex, likely via the docking of the C-termini of ARC into the intersubunit pockets in the alpha-rings, may trigger opening of the gate for substrate entry. Interconversion between the open-gate and close-gate conformations leads to a dynamic regulation of the 20S proteasome proteolysis activity. Its function is as follows. Component of the proteasome core, a large protease complex with broad specificity involved in protein degradation. In Nocardioides sp. (strain ATCC BAA-499 / JS614), this protein is Proteasome subunit alpha.